The chain runs to 418 residues: Elongation factor 1-gamma 1 (418 aa).

One can recognise a GST N-terminal domain in the interval 1 to 82 (MALVLHTFDG…YVTRSKSDNP (82 aa)). A GST C-terminal domain is found at 87-213 (SLIEYAHIEQ…GDVKQADSVP (127 aa)). Residues 211-265 (SVPQVQKKAAAPKEQKPKEAKKEAPKEAPKPKAAEKPEEEEEAPKPKPKNPLDLL) are disordered. A compositionally biased stretch (basic and acidic residues) spans 221–246 (APKEQKPKEAKKEAPKEAPKPKAAEK). Residues 258–418 (PKNPLDLLPP…EALLDAKCFK (161 aa)) form the EF-1-gamma C-terminal domain.

As to quaternary structure, EF-1 is composed of four subunits: alpha, beta, delta, and gamma.

Probably plays a role in anchoring the complex to other cellular components. This is Elongation factor 1-gamma 1 from Oryza sativa subsp. japonica (Rice).